Here is a 341-residue protein sequence, read N- to C-terminus: MATIKDVAKRANVSTTTVSHVINKTRFVAEETRNAVWAAIKELHYSPSAVARSLKVNHTKSIGLLATSSEAAYFAEIIEAVEKNCFQKGYTLILGNAWNNLEKQRAYLSMMAQKRVDGLLVMCSEYPEPLLAMLEEYRHIPMVVMDWGEAKADFTDAVIDNAFEGGYMAGRYLIERGHREIGVIPGPLERNTGAGRLVGFMKAMEEAMIKVPESWIVQGDFEPESGYRAMQQILSQPHRPTAVFCGGDIMAMGALCAADEMGLRVPQDVSLIGYDNVRNARYFTPALTTIHQPKDSLGETAFNMLLDRIVNKREEPQSIEVHPRLIERRSVADGPFRDYRR.

The region spanning 2-56 (ATIKDVAKRANVSTTTVSHVINKTRFVAEETRNAVWAAIKELHYSPSAVARSLKV) is the HTH lacI-type domain. Positions 4 to 23 (IKDVAKRANVSTTTVSHVIN) form a DNA-binding region, H-T-H motif. The DNA-binding element occupies 48–56 (SAVARSLKV). Hypoxanthine-binding residues include tyrosine 73, arginine 190, threonine 192, phenylalanine 221, and aspartate 275.

In terms of assembly, homodimer.

It functions in the pathway purine metabolism; purine nucleotide biosynthesis [regulation]. Functionally, is the main repressor of the genes involved in the de novo synthesis of purine nucleotides, regulating purB, purC, purEK, purF, purHD, purL, purMN and guaBA expression. PurR is allosterically activated to bind its cognate DNA by binding the purine corepressors, hypoxanthine or guanine, thereby effecting transcription repression. In Shigella sonnei (strain Ss046), this protein is HTH-type transcriptional repressor PurR.